A 222-amino-acid polypeptide reads, in one-letter code: Glutathione S-transferase alpha-1 (222 aa).

An N-acetylmethionine modification is found at methionine 1. The GST N-terminal domain occupies 3 to 83 (GKPVLHYFNA…YIATKYDLYG (81 aa)). At lysine 4 the chain carries N6-succinyllysine. Glutathione is bound by residues tyrosine 9, lysine 45, 54-55 (QV), and 67-68 (QT). One can recognise a GST C-terminal domain in the interval 85–208 (DMKERALIDM…QPGSQRKLPV (124 aa)).

This sequence belongs to the GST superfamily. Alpha family. Homodimer. Homodimer or heterodimer of GSTA1 and GSTA2.

It localises to the cytoplasm. It carries out the reaction RX + glutathione = an S-substituted glutathione + a halide anion + H(+). The catalysed reaction is prostaglandin A2 + glutathione = prostaglandin A2-S-(R)-glutathione. The enzyme catalyses prostaglandin J2 + glutathione = prostaglandin J2-S-(R)-glutathione. It catalyses the reaction (13S)-hydroperoxy-(9Z,11E)-octadecadienoate + 2 glutathione = (13S)-hydroxy-(9Z,11E)-octadecadienoate + glutathione disulfide + H2O. It carries out the reaction androst-5-ene-3,17-dione = androst-4-ene-3,17-dione. Its function is as follows. Glutathione S-transferase that catalyzes the nucleophilic attack of the sulfur atom of glutathione on the electrophilic groups of a wide range of exogenous and endogenous compounds. Involved in the formation of glutathione conjugates of both prostaglandin A2 (PGA2) and prostaglandin J2 (PGJ2). It also catalyzes the isomerization of D5-androstene-3,17-dione (AD) into D4-androstene-3,17-dione and may therefore play an important role in hormone biosynthesis. Through its glutathione-dependent peroxidase activity toward the fatty acid hydroperoxide (13S)-hydroperoxy-(9Z,11E)-octadecadienoate/13-HPODE it is also involved in the metabolism of oxidized linoleic acid. This is Glutathione S-transferase alpha-1 (Gsta1) from Rattus norvegicus (Rat).